A 306-amino-acid chain; its full sequence is Lipoyl synthase (306 aa).

[4Fe-4S] cluster is bound by residues C55, C60, C66, C81, C85, C88, and S294. The Radical SAM core domain maps to 67-283; that stretch reads WNHRTATFLL…RSYALARGFT (217 aa).

The protein belongs to the radical SAM superfamily. Lipoyl synthase family. [4Fe-4S] cluster serves as cofactor.

It localises to the cytoplasm. The enzyme catalyses [[Fe-S] cluster scaffold protein carrying a second [4Fe-4S](2+) cluster] + N(6)-octanoyl-L-lysyl-[protein] + 2 oxidized [2Fe-2S]-[ferredoxin] + 2 S-adenosyl-L-methionine + 4 H(+) = [[Fe-S] cluster scaffold protein] + N(6)-[(R)-dihydrolipoyl]-L-lysyl-[protein] + 4 Fe(3+) + 2 hydrogen sulfide + 2 5'-deoxyadenosine + 2 L-methionine + 2 reduced [2Fe-2S]-[ferredoxin]. It functions in the pathway protein modification; protein lipoylation via endogenous pathway; protein N(6)-(lipoyl)lysine from octanoyl-[acyl-carrier-protein]: step 2/2. Catalyzes the radical-mediated insertion of two sulfur atoms into the C-6 and C-8 positions of the octanoyl moiety bound to the lipoyl domains of lipoate-dependent enzymes, thereby converting the octanoylated domains into lipoylated derivatives. This chain is Lipoyl synthase, found in Chloroflexus aurantiacus (strain ATCC 29364 / DSM 637 / Y-400-fl).